A 152-amino-acid polypeptide reads, in one-letter code: SsrA-binding protein (152 aa).

Positions 122 to 152 (KGKKNHDKRETEAARDWQRDKARLMKGDRGD) are disordered. Basic and acidic residues predominate over residues 128–152 (DKRETEAARDWQRDKARLMKGDRGD).

This sequence belongs to the SmpB family.

It localises to the cytoplasm. Required for rescue of stalled ribosomes mediated by trans-translation. Binds to transfer-messenger RNA (tmRNA), required for stable association of tmRNA with ribosomes. tmRNA and SmpB together mimic tRNA shape, replacing the anticodon stem-loop with SmpB. tmRNA is encoded by the ssrA gene; the 2 termini fold to resemble tRNA(Ala) and it encodes a 'tag peptide', a short internal open reading frame. During trans-translation Ala-aminoacylated tmRNA acts like a tRNA, entering the A-site of stalled ribosomes, displacing the stalled mRNA. The ribosome then switches to translate the ORF on the tmRNA; the nascent peptide is terminated with the 'tag peptide' encoded by the tmRNA and targeted for degradation. The ribosome is freed to recommence translation, which seems to be the essential function of trans-translation. This is SsrA-binding protein from Caulobacter sp. (strain K31).